Here is a 233-residue protein sequence, read N- to C-terminus: Ribitol-5-phosphate cytidylyltransferase (233 aa).

CTP contacts are provided by residues 7–10 and 80–86; these read LAGG and GADRNET.

Belongs to the IspD/TarI cytidylyltransferase family. TarI subfamily.

It catalyses the reaction D-ribitol 5-phosphate + CTP + H(+) = CDP-L-ribitol + diphosphate. It functions in the pathway cell wall biogenesis; poly(ribitol phosphate) teichoic acid biosynthesis. Its function is as follows. Catalyzes the transfer of the cytidylyl group of CTP to D-ribitol 5-phosphate. The sequence is that of Ribitol-5-phosphate cytidylyltransferase from Lactiplantibacillus plantarum (strain ATCC BAA-793 / NCIMB 8826 / WCFS1) (Lactobacillus plantarum).